The primary structure comprises 199 residues: MKIGVIAIQGAVSEHVDALRRALKERGVEAEVVEIKHKGIVPECSGIVIPGGESTTLCRLLAREGIAEEIKEAAAKGVPILGTCAGLIVIAKEGDRQVEKTGQELLGIMDTRVNRNAFGRQRDSFEAELEVFILDSPFTGVFIRAPGIVSCGPGVKVLSRLEGMIVAAEQGNVLALAFHPELTDDLRIHQYFLDKVLNC.

52–54 contacts L-glutamine; that stretch reads GES. Cysteine 84 serves as the catalytic Nucleophile. Residues arginine 115 and 143–144 each bind L-glutamine; that span reads IR. Catalysis depends on charge relay system residues histidine 179 and glutamate 181.

Belongs to the glutaminase PdxT/SNO family. In terms of assembly, in the presence of PdxS, forms a dodecamer of heterodimers. Only shows activity in the heterodimer.

It carries out the reaction aldehydo-D-ribose 5-phosphate + D-glyceraldehyde 3-phosphate + L-glutamine = pyridoxal 5'-phosphate + L-glutamate + phosphate + 3 H2O + H(+). The enzyme catalyses L-glutamine + H2O = L-glutamate + NH4(+). Its pathway is cofactor biosynthesis; pyridoxal 5'-phosphate biosynthesis. Catalyzes the hydrolysis of glutamine to glutamate and ammonia as part of the biosynthesis of pyridoxal 5'-phosphate. The resulting ammonia molecule is channeled to the active site of PdxS. The polypeptide is Pyridoxal 5'-phosphate synthase subunit PdxT (Methanosarcina mazei (strain ATCC BAA-159 / DSM 3647 / Goe1 / Go1 / JCM 11833 / OCM 88) (Methanosarcina frisia)).